Consider the following 284-residue polypeptide: MHVVSTKQMLNNAQRGGYAVPAFNIHNLETMQVVVETAANLHAPVIIAGTPGTFTHAGTENLLALVSAMAKQYHHPLAIHLDHHTKFDDIAQKVRSGVRSVMIDASHLPFAQNISRVKEVVDFCHRFDVSVEAELGQLGGQEDDVQVNEADAFYTNPAQAREFAEATGIDSLAVAIGTAHGMYASAPALDFSRLENIRQWVNLPLVLHGASGLSTKDIQQTIKLGICKINVATELKNAFSQALKNYLTEHPEATEPRDYLQSAKSAMRDVVSKVIADCGCEGRA.

Aspartate 82 acts as the Proton donor in catalysis. Residues histidine 83 and histidine 180 each contribute to the Zn(2+) site. Glycine 181 provides a ligand contact to dihydroxyacetone phosphate. A Zn(2+)-binding site is contributed by histidine 208. Dihydroxyacetone phosphate is bound by residues glycine 209–serine 211 and asparagine 230–threonine 233.

It belongs to the class II fructose-bisphosphate aldolase family. TagBP aldolase GatY subfamily. As to quaternary structure, forms a complex with GatZ. The cofactor is Zn(2+).

It carries out the reaction D-tagatofuranose 1,6-bisphosphate = D-glyceraldehyde 3-phosphate + dihydroxyacetone phosphate. Its pathway is carbohydrate metabolism; D-tagatose 6-phosphate degradation; D-glyceraldehyde 3-phosphate and glycerone phosphate from D-tagatose 6-phosphate: step 2/2. Catalytic subunit of the tagatose-1,6-bisphosphate aldolase GatYZ, which catalyzes the reversible aldol condensation of dihydroxyacetone phosphate (DHAP or glycerone-phosphate) with glyceraldehyde 3-phosphate (G3P) to produce tagatose 1,6-bisphosphate (TBP). Requires GatZ subunit for full activity and stability. Is involved in the catabolism of galactitol. The sequence is that of D-tagatose-1,6-bisphosphate aldolase subunit GatY from Shigella boydii serotype 4 (strain Sb227).